The primary structure comprises 580 residues: uncharacterized protein (580 aa).

This is an uncharacterized protein from Methanocaldococcus jannaschii (strain ATCC 43067 / DSM 2661 / JAL-1 / JCM 10045 / NBRC 100440) (Methanococcus jannaschii).